Consider the following 1059-residue polypeptide: Protein cappuccino (1059 aa).

Composition is skewed to polar residues over residues Ala62–Gly80 and Ala90–Ser123. Disordered stretches follow at residues Ala62 to Thr146 and Gln448 to Pro647. Positions Leu133–Phe142 are enriched in pro residues. Basic and acidic residues predominate over residues Ser468–His481. The region spanning Pro480 to Ser560 is the FH1 domain. A compositionally biased stretch (pro residues) spans Val483–Pro541. Residues Arg585 to Ser1032 form the FH2 domain. Over residues Thr620–Ser629 the composition is skewed to polar residues. The segment at Lys1049 to Asn1059 is important for interaction with spir.

This sequence belongs to the formin homology family. Cappuccino subfamily. As to quaternary structure, interacts with wash. Interacts with spir.

The protein localises to the cytoplasm. It localises to the cytoskeleton. The protein resides in the cytosol. Its subcellular location is the membrane. It is found in the cytoplasmic vesicle membrane. In terms of biological role, acts as an actin nucleation factor and promotes assembly of actin filaments together with spir. May play a role in intracellular vesicle transport along actin fibers, providing a novel link between actin cytoskeleton dynamics and intracellular transport. This chain is Protein cappuccino (capu), found in Drosophila melanogaster (Fruit fly).